A 257-amino-acid polypeptide reads, in one-letter code: uncharacterized protein (257 aa).

This is an uncharacterized protein from Mycobacterium tuberculosis (strain CDC 1551 / Oshkosh).